Here is a 554-residue protein sequence, read N- to C-terminus: Solute carrier family 22 member 22 (554 aa).

Residues 1-15 lie on the Cytoplasmic side of the membrane; sequence MDFDEILHHVGDSGR. The chain crosses the membrane as a helical span at residues 16–36; it reads FQICMIILLNILSLVLSPHDV. The Extracellular segment spans residues 37–144; sequence LENFTAAIPA…DLVCDFQSFK (108 aa). A glycan (N-linked (GlcNAc...) asparagine) is linked at asparagine 39. Residues 145-165 form a helical membrane-spanning segment; sequence YYAQATSLAGHLVSCPLSGII. Residues 166–172 are Cytoplasmic-facing; the sequence is SDRFGRK. The helical transmembrane segment at 173 to 193 threads the bilayer; it reads PLLMYCSLAYGAVGTYCAFAP. N-linked (GlcNAc...) asparagine glycosylation occurs at asparagine 194. Topologically, residues 194–199 are extracellular; the sequence is NFSVYC. A helical membrane pass occupies residues 200–220; the sequence is VLRFLLSAFQSTILINSLILV. The Cytoplasmic portion of the chain corresponds to 221-231; sequence LEEASVQWHPT. A helical transmembrane segment spans residues 232-252; it reads IIVLSGLFNSIGQGVLGGLAY. Topologically, residues 253 to 258 are extracellular; sequence VISDWH. A helical membrane pass occupies residues 259–279; it reads LLQLAYALPFFIFFVLFCWVP. Topologically, residues 280–347 are cytoplasmic; sequence ESVRWLIITG…DIFINPLIRK (68 aa). The chain crosses the membrane as a helical span at residues 348–368; the sequence is IVLSNSSLLFAELFSFVGLLL. Topologically, residues 369–376 are extracellular; that stretch reads DVQLLGKN. A helical transmembrane segment spans residues 377–397; sequence MFLTQIFLGAIDVPSKSLTYF. Residues 398 to 405 lie on the Cytoplasmic side of the membrane; it reads TIRNVSRR. Residues 406 to 426 traverse the membrane as a helical segment; it reads PLIAFLLLTTGSCITITIFIS. Topologically, residues 427 to 434 are extracellular; it reads EEMYVLRT. A helical membrane pass occupies residues 435 to 455; the sequence is IIFILGKGCFAAFTCISTTYI. The Cytoplasmic segment spans residues 456-466; that stretch reads NELSPVELRST. The helical transmembrane segment at 467-487 threads the bilayer; it reads LNGVFLAVVRLAGVLSALTLA. The Extracellular segment spans residues 488–491; the sequence is TRKY. Residues 492 to 512 form a helical membrane-spanning segment; sequence FVYLPMILYGVLPIVATISIL. Over 513–554 the chain is Cytoplasmic; that stretch reads FLPETFNLPHTDIIKDMEKRKRLMSKNISKKEGQDFLETTEC.

The protein belongs to the major facilitator (TC 2.A.1) superfamily. Organic cation transporter (TC 2.A.1.19) family. As to expression, specifically expressed in kidney where it is found in proximal convoluted tubules (at protein level). Colocalizes with the prostaglandin-inactivating enzyme HPGD in kidney (at protein level). Not detected in other tissues tested.

Its subcellular location is the basolateral cell membrane. Its function is as follows. Sodium-independent organic anion transporter which exhibits high specificity for a subset of prostaglandins including prostaglandin E2 (PGE2), prostaglandin E1 (PGE1), prostaglandin F2-alpha (PGF2-alpha) and prostaglandin D2 (PGD2). In Mus musculus (Mouse), this protein is Solute carrier family 22 member 22.